The sequence spans 63 residues: ATP synthase F(0) complex subunit 8 (63 aa).

A helical membrane pass occupies residues 8–24; that stretch reads TWLLTILSMLLTLFVLF. Position 57 is an N6-acetyllysine (Lys-57).

It belongs to the ATPase protein 8 family. Component of the ATP synthase complex composed at least of ATP5F1A/subunit alpha, ATP5F1B/subunit beta, ATP5MC1/subunit c (homooctomer), MT-ATP6/subunit a, MT-ATP8/subunit 8, ATP5ME/subunit e, ATP5MF/subunit f, ATP5MG/subunit g, ATP5MK/subunit k, ATP5MJ/subunit j, ATP5F1C/subunit gamma, ATP5F1D/subunit delta, ATP5F1E/subunit epsilon, ATP5PF/subunit F6, ATP5PB/subunit b, ATP5PD/subunit d, ATP5PO/subunit OSCP. ATP synthase complex consists of a soluble F(1) head domain (subunits alpha(3) and beta(3)) - the catalytic core - and a membrane F(0) domain - the membrane proton channel (subunits c, a, 8, e, f, g, k and j). These two domains are linked by a central stalk (subunits gamma, delta, and epsilon) rotating inside the F1 region and a stationary peripheral stalk (subunits F6, b, d, and OSCP). Interacts with PRICKLE3.

The protein resides in the mitochondrion membrane. Subunit 8, of the mitochondrial membrane ATP synthase complex (F(1)F(0) ATP synthase or Complex V) that produces ATP from ADP in the presence of a proton gradient across the membrane which is generated by electron transport complexes of the respiratory chain. ATP synthase complex consist of a soluble F(1) head domain - the catalytic core - and a membrane F(1) domain - the membrane proton channel. These two domains are linked by a central stalk rotating inside the F(1) region and a stationary peripheral stalk. During catalysis, ATP synthesis in the catalytic domain of F(1) is coupled via a rotary mechanism of the central stalk subunits to proton translocation. In vivo, can only synthesize ATP although its ATP hydrolase activity can be activated artificially in vitro. Part of the complex F(0) domain. In Balaenoptera musculus (Blue whale), this protein is ATP synthase F(0) complex subunit 8.